Consider the following 367-residue polypeptide: Phosphoribosylaminoimidazole-succinocarboxamide synthase (367 aa).

The protein belongs to the SAICAR synthetase family.

It catalyses the reaction 5-amino-1-(5-phospho-D-ribosyl)imidazole-4-carboxylate + L-aspartate + ATP = (2S)-2-[5-amino-1-(5-phospho-beta-D-ribosyl)imidazole-4-carboxamido]succinate + ADP + phosphate + 2 H(+). The protein operates within purine metabolism; IMP biosynthesis via de novo pathway; 5-amino-1-(5-phospho-D-ribosyl)imidazole-4-carboxamide from 5-amino-1-(5-phospho-D-ribosyl)imidazole-4-carboxylate: step 1/2. This chain is Phosphoribosylaminoimidazole-succinocarboxamide synthase, found in Shewanella sp. (strain MR-7).